Reading from the N-terminus, the 726-residue chain is Catalase-peroxidase (726 aa).

Residues 1–33 (MSTSDDIHNTTATGKCPFHQGGHDQSAGGGTTT) are disordered. The tryptophyl-tyrosyl-methioninium (Trp-Tyr) (with M-252) cross-link spans 105 to 226 (WHGAGTYRSI…LGATEMGLIY (122 aa)). His106 (proton acceptor) is an active-site residue. The tryptophyl-tyrosyl-methioninium (Tyr-Met) (with W-105) cross-link spans 226–252 (YVNPEGPDHSGEPLSAAAAIRATFGNM). His267 contributes to the heme b binding site.

The protein belongs to the peroxidase family. Peroxidase/catalase subfamily. Homodimer or homotetramer. Requires heme b as cofactor. Formation of the three residue Trp-Tyr-Met cross-link is important for the catalase, but not the peroxidase activity of the enzyme.

It carries out the reaction H2O2 + AH2 = A + 2 H2O. The catalysed reaction is 2 H2O2 = O2 + 2 H2O. Its function is as follows. Bifunctional enzyme with both catalase and broad-spectrum peroxidase activity. The polypeptide is Catalase-peroxidase (Escherichia coli (strain UTI89 / UPEC)).